The primary structure comprises 168 residues: Ubiquitin-conjugating enzyme E2 7 (168 aa).

The interval 1–21 is disordered; it reads MATAPARRASSSRSSSEISRT. The UBC core domain occupies 6 to 166; the sequence is ARRASSSRSS…VRRAVRKSQE (161 aa). The Glycyl thioester intermediate role is filled by Cys92.

This sequence belongs to the ubiquitin-conjugating enzyme family.

It carries out the reaction S-ubiquitinyl-[E1 ubiquitin-activating enzyme]-L-cysteine + [E2 ubiquitin-conjugating enzyme]-L-cysteine = [E1 ubiquitin-activating enzyme]-L-cysteine + S-ubiquitinyl-[E2 ubiquitin-conjugating enzyme]-L-cysteine.. The protein operates within protein modification; protein ubiquitination. Functionally, catalyzes the covalent attachment of ubiquitin to other proteins so as to signal them for selective protein degradation. Involved in the formation of multiubiquitin chains. The protein is Ubiquitin-conjugating enzyme E2 7 (UBC7) of Triticum aestivum (Wheat).